We begin with the raw amino-acid sequence, 931 residues long: GPI ethanolamine phosphate transferase 1 (931 aa).

Residue methionine 1 is a topological domain, cytoplasmic. Residues 2-24 form a helical membrane-spanning segment; the sequence is LLFFTLGLLIHFVFFASIFDIYF. Residues 25–442 lie on the Lumenal side of the membrane; it reads TSPLVHGMTP…SYYHTYDRFF (418 aa). 3 N-linked (GlcNAc...) asparagine glycosylation sites follow: asparagine 128, asparagine 192, and asparagine 350. The chain crosses the membrane as a helical span at residues 443-463; sequence LGVNVVIGFVGWISYASLLII. Residues 464 to 482 lie on the Cytoplasmic side of the membrane; sequence KSHSNLIKGVSKEVKKPSH. A helical membrane pass occupies residues 483-503; sequence LLPCSFVAIGILVAFFLLIQA. The Lumenal segment spans residues 504 to 508; it reads CPWTY. A helical transmembrane segment spans residues 509-529; that stretch reads YVYGLLPLPIWYAVLREFQVI. The Cytoplasmic segment spans residues 530-543; the sequence is QDLVVSVLTYPLSH. The chain crosses the membrane as a helical span at residues 544–564; sequence FVGYLLAFTLGIEVLVLSFFY. Position 565 (arginine 565) is a topological domain, lumenal. A helical membrane pass occupies residues 566-586; sequence YMLTAGLTAFAAWPFLTRLWT. Residues 587–591 lie on the Cytoplasmic side of the membrane; it reads RAKMT. The helical transmembrane segment at 592–612 threads the bilayer; sequence SLSWTFFSLLLAVFPLMPVVG. Over 613–618 the chain is Lumenal; it reads RKPDIS. The helical transmembrane segment at 619-639 threads the bilayer; the sequence is LVMGAGLLVLLLSLCVVTSLM. Residues 640–649 lie on the Cytoplasmic side of the membrane; it reads KRKDSFIKEE. A helical membrane pass occupies residues 650-670; that stretch reads LLVHLLQVLSTVLSMYVVYST. The Lumenal portion of the chain corresponds to 671-685; that stretch reads QSSLLRKQGLPLMNQ. Residues 686-706 traverse the membrane as a helical segment; it reads IISWATLASSLVVPLLSSPVL. At 707–723 the chain is on the cytoplasmic side; it reads FQRLFSILLSLMSTYLL. Residues 724–744 traverse the membrane as a helical segment; that stretch reads LSTGYEALFPLVLSCLMFVWI. The Lumenal segment spans residues 745 to 786; it reads NIEQETLQQSGVCCKQKLTSIQFSYNTDITQFRQLYLDDIRR. Residues 787-807 form a helical membrane-spanning segment; that stretch reads AFFLVFFLVTAFFGTGNIASI. At 808 to 824 the chain is on the cytoplasmic side; it reads NSFDLASVYCFLTVFSP. A helical transmembrane segment spans residues 825–845; that stretch reads FMMGALMMWKILIPFVLVMCA. The Lumenal segment spans residues 846 to 858; sequence FEAVQLTTQLSSK. Residues 859-879 traverse the membrane as a helical segment; the sequence is SLFLIVLVISDIMALHFFFLV. The Cytoplasmic segment spans residues 880–894; it reads KDYGSWLDIGTSISH. A helical transmembrane segment spans residues 895–915; it reads YVIVMSMTIFLVFLNGLAQLL. Topologically, residues 916–931 are lumenal; sequence TTKKLRLCGKPKSHFM.

The protein belongs to the PIGG/PIGN/PIGO family. PIGN subfamily.

Its subcellular location is the endoplasmic reticulum membrane. Its pathway is glycolipid biosynthesis; glycosylphosphatidylinositol-anchor biosynthesis. Ethanolamine phosphate transferase that catalyzes an ethanolamine phosphate (EtNP) transfer from phosphatidylethanolamine (PE) to the 2-OH position of the first alpha-1,4-linked mannose of the alpha-D-Man-(1-&gt;6)-alpha-D-Man-(1-&gt;4)-alpha-D-GlcN-(1-&gt;6)-(1-radyl,2-acyl-sn-glycero-3-phospho)-2-acyl-inositol (also termed H3) intermediate to generate an alpha-D-Man-(1-&gt;6)-2-PEtn-alpha-D-Man-(1-&gt;4)-alpha-D-GlcN-(1-&gt;6)-(1-radyl,2-acyl-sn-glycero-3-phospho)-2-acyl-inositol and participates in the eighth step of the glycosylphosphatidylinositol-anchor biosynthesis. May act as suppressor of replication stress and chromosome missegregation. This chain is GPI ethanolamine phosphate transferase 1, found in Homo sapiens (Human).